The primary structure comprises 326 residues: Acetyl-coenzyme A carboxylase carboxyl transferase subunit beta (326 aa).

The CoA carboxyltransferase N-terminal domain maps to 32–301 (LWTKCPACGV…ILPPLNADSN (270 aa)). Positions 36, 39, 55, and 58 each coordinate Zn(2+). The segment at 36 to 58 (CPACGVLTYTKDLQGNWMVCVEC) adopts a C4-type zinc-finger fold.

This sequence belongs to the AccD/PCCB family. Acetyl-CoA carboxylase is a heterohexamer composed of biotin carboxyl carrier protein (AccB), biotin carboxylase (AccC) and two subunits each of ACCase subunit alpha (AccA) and ACCase subunit beta (AccD). Zn(2+) serves as cofactor.

The protein resides in the cytoplasm. The catalysed reaction is N(6)-carboxybiotinyl-L-lysyl-[protein] + acetyl-CoA = N(6)-biotinyl-L-lysyl-[protein] + malonyl-CoA. It participates in lipid metabolism; malonyl-CoA biosynthesis; malonyl-CoA from acetyl-CoA: step 1/1. Functionally, component of the acetyl coenzyme A carboxylase (ACC) complex. Biotin carboxylase (BC) catalyzes the carboxylation of biotin on its carrier protein (BCCP) and then the CO(2) group is transferred by the transcarboxylase to acetyl-CoA to form malonyl-CoA. The sequence is that of Acetyl-coenzyme A carboxylase carboxyl transferase subunit beta from Synechocystis sp. (strain ATCC 27184 / PCC 6803 / Kazusa).